The chain runs to 140 residues: FAD synthase (140 aa).

Residues 10 to 11, 15 to 18, and Asn93 contribute to the ATP site; these read TF and HPGH.

Belongs to the archaeal FAD synthase family. In terms of assembly, homodimer. A divalent metal cation is required as a cofactor.

The enzyme catalyses FMN + ATP + H(+) = FAD + diphosphate. Its pathway is cofactor biosynthesis; FAD biosynthesis; FAD from FMN: step 1/1. Its function is as follows. Catalyzes the transfer of the AMP portion of ATP to flavin mononucleotide (FMN) to produce flavin adenine dinucleotide (FAD) coenzyme. The sequence is that of FAD synthase from Methanocella arvoryzae (strain DSM 22066 / NBRC 105507 / MRE50).